Consider the following 319-residue polypeptide: Formimidoylglutamase (319 aa).

Histidine 131, aspartate 154, histidine 156, aspartate 158, cysteine 248, and aspartate 250 together coordinate Mn(2+).

This sequence belongs to the arginase family. Requires Mn(2+) as cofactor.

The catalysed reaction is N-formimidoyl-L-glutamate + H2O = formamide + L-glutamate. It functions in the pathway amino-acid degradation; L-histidine degradation into L-glutamate; L-glutamate from N-formimidoyl-L-glutamate (hydrolase route): step 1/1. Its function is as follows. Catalyzes the conversion of N-formimidoyl-L-glutamate to L-glutamate and formamide. In Legionella pneumophila (strain Paris), this protein is Formimidoylglutamase.